The following is a 465-amino-acid chain: Probable M18 family aminopeptidase 1 (465 aa).

Residues H105, H180, and H441 each contribute to the Zn(2+) site.

This sequence belongs to the peptidase M18 family. It depends on Zn(2+) as a cofactor.

This is Probable M18 family aminopeptidase 1 (apeA) from Clostridium acetobutylicum (strain ATCC 824 / DSM 792 / JCM 1419 / IAM 19013 / LMG 5710 / NBRC 13948 / NRRL B-527 / VKM B-1787 / 2291 / W).